The chain runs to 299 residues: tRNA dimethylallyltransferase (299 aa).

11-18 (GPTAVGKT) contributes to the ATP binding site. 13–18 (TAVGKT) lines the substrate pocket. Positions 36–39 (DSQQ) are interaction with substrate tRNA.

Belongs to the IPP transferase family. Monomer. Mg(2+) serves as cofactor.

The catalysed reaction is adenosine(37) in tRNA + dimethylallyl diphosphate = N(6)-dimethylallyladenosine(37) in tRNA + diphosphate. In terms of biological role, catalyzes the transfer of a dimethylallyl group onto the adenine at position 37 in tRNAs that read codons beginning with uridine, leading to the formation of N6-(dimethylallyl)adenosine (i(6)A). This chain is tRNA dimethylallyltransferase, found in Streptococcus pyogenes serotype M4 (strain MGAS10750).